We begin with the raw amino-acid sequence, 452 residues long: Serine--tRNA ligase (452 aa).

Residue T251–E253 coordinates L-serine. R282 to E284 is a binding site for ATP. An L-serine-binding site is contributed by E305. E369–S372 lines the ATP pocket. S404 lines the L-serine pocket.

The protein belongs to the class-II aminoacyl-tRNA synthetase family. Type-1 seryl-tRNA synthetase subfamily. As to quaternary structure, homodimer. The tRNA molecule binds across the dimer.

It localises to the cytoplasm. The catalysed reaction is tRNA(Ser) + L-serine + ATP = L-seryl-tRNA(Ser) + AMP + diphosphate + H(+). It carries out the reaction tRNA(Sec) + L-serine + ATP = L-seryl-tRNA(Sec) + AMP + diphosphate + H(+). It participates in aminoacyl-tRNA biosynthesis; selenocysteinyl-tRNA(Sec) biosynthesis; L-seryl-tRNA(Sec) from L-serine and tRNA(Sec): step 1/1. Its function is as follows. Catalyzes the attachment of serine to tRNA(Ser). Is also able to aminoacylate tRNA(Sec) with serine, to form the misacylated tRNA L-seryl-tRNA(Sec), which will be further converted into selenocysteinyl-tRNA(Sec). The chain is Serine--tRNA ligase from Albidiferax ferrireducens (strain ATCC BAA-621 / DSM 15236 / T118) (Rhodoferax ferrireducens).